The following is a 492-amino-acid chain: Protein KOKOPELLI (492 aa).

Disordered stretches follow at residues 218 to 354 and 394 to 426; these read VTSP…RNVM and SKFH…QHQG. Over residues 256–270 the composition is skewed to acidic residues; it reads QETETFDDDSSETEA. Residues 287–305 show a composition bias toward low complexity; sequence STSQEYSGETGSSSGSEWE. Residues 317–336 show a composition bias toward polar residues; the sequence is ESSYPPQNDDSVSEVSTSPP. Composition is skewed to basic and acidic residues over residues 337-348 and 403-412; these read HTDRDTSREPGK and KSKERKRPMS.

In terms of tissue distribution, mostly expressed in pollen and open flowers and, to a lower extent, in closed flowers.

Functionally, positively regulates reproductive function by facilitating male gametophyte formation and double fertilization. The polypeptide is Protein KOKOPELLI (Arabidopsis thaliana (Mouse-ear cress)).